The sequence spans 282 residues: Acetyl-coenzyme A carboxylase carboxyl transferase subunit beta (282 aa).

One can recognise a CoA carboxyltransferase N-terminal domain in the interval 28 to 282 (IMTKCPSCRT…TKILDIHHVS (255 aa)). The Zn(2+) site is built by cysteine 32, cysteine 35, cysteine 51, and cysteine 54. The C4-type zinc finger occupies 32-54 (CPSCRTIMYTKELKKNLYVCDSC).

Belongs to the AccD/PCCB family. In terms of assembly, acetyl-CoA carboxylase is a heterohexamer composed of biotin carboxyl carrier protein (AccB), biotin carboxylase (AccC) and two subunits each of ACCase subunit alpha (AccA) and ACCase subunit beta (AccD). Zn(2+) serves as cofactor.

Its subcellular location is the cytoplasm. It carries out the reaction N(6)-carboxybiotinyl-L-lysyl-[protein] + acetyl-CoA = N(6)-biotinyl-L-lysyl-[protein] + malonyl-CoA. It participates in lipid metabolism; malonyl-CoA biosynthesis; malonyl-CoA from acetyl-CoA: step 1/1. Component of the acetyl coenzyme A carboxylase (ACC) complex. Biotin carboxylase (BC) catalyzes the carboxylation of biotin on its carrier protein (BCCP) and then the CO(2) group is transferred by the transcarboxylase to acetyl-CoA to form malonyl-CoA. The sequence is that of Acetyl-coenzyme A carboxylase carboxyl transferase subunit beta from Halalkalibacterium halodurans (strain ATCC BAA-125 / DSM 18197 / FERM 7344 / JCM 9153 / C-125) (Bacillus halodurans).